The sequence spans 122 residues: MNAKAEAKESRFDLLKWLLVAVLVVVAVVGNQYFSAQPILYRVLGILVLAVIAAFLALQTAKGQAFFSLAKEARVEIRKVVWPSRQETTQTTLIVVAVVLVMALLLWGLDSLLGWLVSMIVG.

The next 3 helical transmembrane spans lie at 14–34 (LLKW…NQYF), 38–58 (PILY…FLAL), and 93–113 (LIVV…DSLL).

This sequence belongs to the SecE/SEC61-gamma family. In terms of assembly, component of the Sec protein translocase complex. Heterotrimer consisting of SecY, SecE and SecG subunits. The heterotrimers can form oligomers, although 1 heterotrimer is thought to be able to translocate proteins. Interacts with the ribosome. Interacts with SecDF, and other proteins may be involved. Interacts with SecA.

It localises to the cell inner membrane. Essential subunit of the Sec protein translocation channel SecYEG. Clamps together the 2 halves of SecY. May contact the channel plug during translocation. In Pseudomonas aeruginosa (strain ATCC 15692 / DSM 22644 / CIP 104116 / JCM 14847 / LMG 12228 / 1C / PRS 101 / PAO1), this protein is Protein translocase subunit SecE.